We begin with the raw amino-acid sequence, 183 residues long: Type II secretion system protein H (183 aa).

The propeptide at 1–8 (MRRHRQSG) is leader sequence. N-methylphenylalanine is present on F9. A helical transmembrane segment spans residues 9-28 (FTLLEVLLVAMLMGLVATAV).

This sequence belongs to the GSP H family. Type II secretion is composed of four main components: the outer membrane complex, the inner membrane complex, the cytoplasmic secretion ATPase and the periplasm-spanning pseudopilus. Interacts with core component ExeG. In terms of processing, cleaved by prepilin peptidase. Methylated by prepilin peptidase at the amino group of the N-terminal phenylalanine once the leader sequence is cleaved by prepilin peptidase.

The protein resides in the cell inner membrane. Functionally, component of the type II secretion system required for the energy-dependent secretion of extracellular factors such as proteases and toxins from the periplasm. Part of the pseudopilus tip complex that is critical for the recognition and binding of secretion substrates. The protein is Type II secretion system protein H (exeH) of Aeromonas hydrophila.